The sequence spans 246 residues: 3-deoxy-manno-octulosonate cytidylyltransferase (246 aa).

It belongs to the KdsB family.

It is found in the cytoplasm. The enzyme catalyses 3-deoxy-alpha-D-manno-oct-2-ulosonate + CTP = CMP-3-deoxy-beta-D-manno-octulosonate + diphosphate. It functions in the pathway nucleotide-sugar biosynthesis; CMP-3-deoxy-D-manno-octulosonate biosynthesis; CMP-3-deoxy-D-manno-octulosonate from 3-deoxy-D-manno-octulosonate and CTP: step 1/1. Its pathway is bacterial outer membrane biogenesis; lipopolysaccharide biosynthesis. In terms of biological role, activates KDO (a required 8-carbon sugar) for incorporation into bacterial lipopolysaccharide in Gram-negative bacteria. The chain is 3-deoxy-manno-octulosonate cytidylyltransferase from Rickettsia peacockii (strain Rustic).